Here is a 61-residue protein sequence, read N- to C-terminus: Metallothionein-2D (61 aa).

The residue at position 1 (Met1) is an N-acetylmethionine. The tract at residues Met1–Cys29 is beta. Residues Cys5, Cys7, Cys13, Cys15, Cys19, Cys21, Cys24, Cys26, Cys29, Cys33, Cys34, Cys36, Cys37, Cys41, Cys44, Cys48, Cys50, Cys57, Cys59, and Cys60 each coordinate a divalent metal cation. The segment at Lys30–Ala61 is alpha.

Belongs to the metallothionein superfamily. Type 1 family. Monomer.

Metallothioneins have a high content of cysteine residues that bind various heavy metals; these proteins are transcriptionally regulated by both heavy metals and glucocorticoids. In Oryctolagus cuniculus (Rabbit), this protein is Metallothionein-2D.